We begin with the raw amino-acid sequence, 79 residues long: Acyl carrier protein (79 aa).

Residues 2 to 77 (SDIEARVRKI…SAIDYANTHQ (76 aa)) enclose the Carrier domain. Residue serine 37 is modified to O-(pantetheine 4'-phosphoryl)serine.

Belongs to the acyl carrier protein (ACP) family. In terms of processing, 4'-phosphopantetheine is transferred from CoA to a specific serine of apo-ACP by AcpS. This modification is essential for activity because fatty acids are bound in thioester linkage to the sulfhydryl of the prosthetic group.

The protein resides in the cytoplasm. It participates in lipid metabolism; fatty acid biosynthesis. Carrier of the growing fatty acid chain in fatty acid biosynthesis. The sequence is that of Acyl carrier protein from Verminephrobacter eiseniae (strain EF01-2).